The sequence spans 348 residues: tRNA pseudouridine synthase B (348 aa).

The active-site Nucleophile is the D52.

Belongs to the pseudouridine synthase TruB family. Type 1 subfamily.

The enzyme catalyses uridine(55) in tRNA = pseudouridine(55) in tRNA. Responsible for synthesis of pseudouridine from uracil-55 in the psi GC loop of transfer RNAs. The sequence is that of tRNA pseudouridine synthase B from Rhodopirellula baltica (strain DSM 10527 / NCIMB 13988 / SH1).